A 432-amino-acid polypeptide reads, in one-letter code: Guanine/hypoxanthine permease PbuO (432 aa).

10 consecutive transmembrane segments (helical) span residues 15–35 (IIAG…NPVI), 51–71 (IIAS…PIAI), 92–112 (GITY…FIIL), 133–153 (ITTG…GIVA), 174–194 (LVGL…ALFI), 196–216 (MAAT…KGFM), 234–254 (FGDV…LVTI), 340–360 (ALSG…SLMM), 379–399 (LVIL…LGFI), and 412–432 (REIH…LFIL).

This sequence belongs to the nucleobase:cation symporter-2 (NCS2) (TC 2.A.40) family. Azg-like subfamily.

It is found in the cell membrane. Its function is as follows. Involved in the uptake of the purine bases hypoxanthine and guanine. May work at purine concentrations higher than 100 uM. The protein is Guanine/hypoxanthine permease PbuO (pbuO) of Bacillus subtilis (strain 168).